A 624-amino-acid chain; its full sequence is Probable Xaa-Pro aminopeptidase P (624 aa).

Aspartate 421, aspartate 432, glutamate 530, and glutamate 544 together coordinate Mn(2+).

Belongs to the peptidase M24B family. Requires Mn(2+) as cofactor.

The enzyme catalyses Release of any N-terminal amino acid, including proline, that is linked to proline, even from a dipeptide or tripeptide.. Catalyzes the removal of a penultimate prolyl residue from the N-termini of peptides. The protein is Probable Xaa-Pro aminopeptidase P (AMPP) of Arthroderma otae (strain ATCC MYA-4605 / CBS 113480) (Microsporum canis).